We begin with the raw amino-acid sequence, 250 residues long: UDP-2,3-diacylglucosamine hydrolase (250 aa).

Asp-8, His-10, Asp-41, Asn-79, and His-114 together coordinate Mn(2+). Residue 79-80 participates in substrate binding; that stretch reads NR. Residues Asp-122, Ser-160, Asp-172, Gln-175, and His-203 each coordinate substrate. Mn(2+) is bound by residues His-203 and His-205.

This sequence belongs to the LpxH family. The cofactor is Mn(2+).

The protein resides in the cell inner membrane. The enzyme catalyses UDP-2-N,3-O-bis[(3R)-3-hydroxytetradecanoyl]-alpha-D-glucosamine + H2O = 2-N,3-O-bis[(3R)-3-hydroxytetradecanoyl]-alpha-D-glucosaminyl 1-phosphate + UMP + 2 H(+). Its pathway is glycolipid biosynthesis; lipid IV(A) biosynthesis; lipid IV(A) from (3R)-3-hydroxytetradecanoyl-[acyl-carrier-protein] and UDP-N-acetyl-alpha-D-glucosamine: step 4/6. In terms of biological role, hydrolyzes the pyrophosphate bond of UDP-2,3-diacylglucosamine to yield 2,3-diacylglucosamine 1-phosphate (lipid X) and UMP by catalyzing the attack of water at the alpha-P atom. Involved in the biosynthesis of lipid A, a phosphorylated glycolipid that anchors the lipopolysaccharide to the outer membrane of the cell. The chain is UDP-2,3-diacylglucosamine hydrolase from Xylella fastidiosa (strain M23).